We begin with the raw amino-acid sequence, 156 residues long: Arginine repressor (156 aa).

The protein belongs to the ArgR family.

It is found in the cytoplasm. It participates in amino-acid biosynthesis; L-arginine biosynthesis [regulation]. Functionally, regulates arginine biosynthesis genes. The sequence is that of Arginine repressor from Tolumonas auensis (strain DSM 9187 / NBRC 110442 / TA 4).